The chain runs to 110 residues: MTSVQNSPRLQQPQEQQQQQQQLSLKIKQLKLKRINELNNKLRKELSRERITASNACLTIINYTSNTKDYTLPELWGYPVAGSNHFIEGLKNAQKNSQMSNSNSVCCTLM.

Cys106 carries the S-palmitoyl cysteine lipid modification. Cysteine methyl ester is present on Cys107. Cys107 is lipidated: S-farnesyl cysteine. A propeptide spans 108-110 (removed in mature form); it reads TLM.

The protein belongs to the G protein gamma family. G proteins are composed of 3 units, alpha, beta and gamma. The beta-gamma subunit complex (STE4-STE18 complex) interacts with PLP1 and PLP2.

It is found in the membrane. In terms of biological role, implicated in the pheromone A- and alpha-factor response pathway. The beta and gamma chains of the putative yeast mating response pathway G protein play a positive role in initiation of the mating response. The chain is Guanine nucleotide-binding protein subunit gamma (STE18) from Saccharomyces cerevisiae (strain ATCC 204508 / S288c) (Baker's yeast).